The primary structure comprises 448 residues: Tapasin (448 aa).

The N-terminal stretch at 1–20 (MKSLSLLLAVALGLATAVSA) is a signal peptide. Residues 21–414 (GPAVIECWFV…LSGPSLEDSV (394 aa)) are Lumenal-facing. A disulfide bridge connects residues Cys27 and Cys91. An N-linked (GlcNAc...) asparagine glycan is attached at Asn253. The 108-residue stretch at 292–399 (PKVSLMPATL…PASGRSAEVT (108 aa)) folds into the Ig-like C1-type domain. Residues Cys315 and Cys382 are joined by a disulfide bond. Residues 415-435 (GLFLSAFLLLGLFKALGWAAV) form a helical membrane-spanning segment. The Cytoplasmic portion of the chain corresponds to 436-448 (YLSTCKDSKKKAE).

Heterodimer with PDIA3; disulfide-linked. Obligatory mediator for the interaction between newly assembled MHC class I molecules, calreticulin, PDIA3 and TAP. Up to 4 MHC class I/tapasin complexes bind to 1 TAP. Interacts with HLA-G-B2M complex; this interaction is required for loading of high affinity peptides. On its own or as part of MHC class I peptide loading complex, interacts with ligand-free MR1 or MR1-B2M complex, providing for stable MR1 pools ready for metabolite antigen processing. As to expression, neutrophils, mostly in fully differentiated cells.

Its subcellular location is the endoplasmic reticulum membrane. Functionally, involved in the association of MHC class I with transporter associated with antigen processing (TAP) and in the assembly of MHC class I with peptide (peptide loading). The sequence is that of Tapasin from Homo sapiens (Human).